The chain runs to 168 residues: Phosphopantetheine adenylyltransferase (168 aa).

Residue Thr11 participates in substrate binding. ATP contacts are provided by residues 11–12 and His19; that span reads TF. Lys43, Thr75, and Arg89 together coordinate substrate. ATP is bound by residues 90-92, Glu100, and 125-131; these read GIR and WSYMSSS.

The protein belongs to the bacterial CoaD family. As to quaternary structure, homohexamer. Mg(2+) is required as a cofactor.

Its subcellular location is the cytoplasm. The enzyme catalyses (R)-4'-phosphopantetheine + ATP + H(+) = 3'-dephospho-CoA + diphosphate. It functions in the pathway cofactor biosynthesis; coenzyme A biosynthesis; CoA from (R)-pantothenate: step 4/5. Reversibly transfers an adenylyl group from ATP to 4'-phosphopantetheine, yielding dephospho-CoA (dPCoA) and pyrophosphate. This is Phosphopantetheine adenylyltransferase from Wigglesworthia glossinidia brevipalpis.